The chain runs to 126 residues: Urease subunit beta (126 aa).

This sequence belongs to the urease beta subunit family. Heterotrimer of UreA (gamma), UreB (beta) and UreC (alpha) subunits. Three heterotrimers associate to form the active enzyme.

Its subcellular location is the cytoplasm. The catalysed reaction is urea + 2 H2O + H(+) = hydrogencarbonate + 2 NH4(+). The protein operates within nitrogen metabolism; urea degradation; CO(2) and NH(3) from urea (urease route): step 1/1. The sequence is that of Urease subunit beta from Frankia casuarinae (strain DSM 45818 / CECT 9043 / HFP020203 / CcI3).